A 189-amino-acid chain; its full sequence is dCTP deaminase (189 aa).

Residues 112 to 117 (KSTYAR), 136 to 138 (TLE), Gln157, Tyr171, and Gln181 contribute to the dCTP site. The Proton donor/acceptor role is filled by Glu138.

This sequence belongs to the dCTP deaminase family. Homotrimer.

It carries out the reaction dCTP + H2O + H(+) = dUTP + NH4(+). Its pathway is pyrimidine metabolism; dUMP biosynthesis; dUMP from dCTP (dUTP route): step 1/2. Catalyzes the deamination of dCTP to dUTP. In Leptothrix cholodnii (strain ATCC 51168 / LMG 8142 / SP-6) (Leptothrix discophora (strain SP-6)), this protein is dCTP deaminase.